A 365-amino-acid polypeptide reads, in one-letter code: Anthranilate phosphoribosyltransferase (365 aa).

5-phospho-alpha-D-ribose 1-diphosphate-binding positions include glycine 96, 99–100 (GD), threonine 104, 106–109 (NIST), 124–132 (KHGNRSVSS), and serine 136. Glycine 96 serves as a coordination point for anthranilate. Residue serine 108 participates in Mg(2+) binding. Asparagine 127 serves as a coordination point for anthranilate. Arginine 182 is a binding site for anthranilate. 2 residues coordinate Mg(2+): aspartate 240 and glutamate 241.

This sequence belongs to the anthranilate phosphoribosyltransferase family. Homodimer. The cofactor is Mg(2+).

The enzyme catalyses N-(5-phospho-beta-D-ribosyl)anthranilate + diphosphate = 5-phospho-alpha-D-ribose 1-diphosphate + anthranilate. Its pathway is amino-acid biosynthesis; L-tryptophan biosynthesis; L-tryptophan from chorismate: step 2/5. Catalyzes the transfer of the phosphoribosyl group of 5-phosphorylribose-1-pyrophosphate (PRPP) to anthranilate to yield N-(5'-phosphoribosyl)-anthranilate (PRA). The polypeptide is Anthranilate phosphoribosyltransferase (Colwellia psychrerythraea (strain 34H / ATCC BAA-681) (Vibrio psychroerythus)).